The sequence spans 196 residues: Peroxynitrite isomerase (196 aa).

The disordered stretch occupies residues 1 to 29 (MSDENPLQPPWLNAPPVDPYPYEESHDLR). Pro residues predominate over residues 7–19 (LQPPWLNAPPVDP). The GXWXGXG signature appears at 46 to 52 (GVWRGRG). His-186 provides a ligand contact to heme b.

This sequence belongs to the nitrobindin family. As to quaternary structure, homodimer. Requires heme b as cofactor.

The enzyme catalyses peroxynitrite = nitrate. Its pathway is nitrogen metabolism. In terms of biological role, heme-binding protein able to scavenge peroxynitrite and to protect free L-tyrosine against peroxynitrite-mediated nitration, by acting as a peroxynitrite isomerase that converts peroxynitrite to nitrate. Therefore, this protein likely plays a role in peroxynitrite sensing and in the detoxification of reactive nitrogen and oxygen species (RNS and ROS, respectively). Is able to bind nitric oxide (NO) in vitro, but may act as a sensor of peroxynitrite levels in vivo. The polypeptide is Peroxynitrite isomerase (Salinispora arenicola (strain CNS-205)).